A 297-amino-acid chain; its full sequence is HTH-type transcriptional regulator ArgP (297 aa).

Residues 4–60 (PDYRTLQALDAVIRERGFERAAQKLCITQSAVSQRIKQLENMFGQPLLVRTVPPRPT) form the HTH lysR-type domain. Residues 21–40 (FERAAQKLCITQSAVSQRIK) constitute a DNA-binding region (H-T-H motif).

Belongs to the LysR transcriptional regulatory family. In terms of assembly, homodimer.

Functionally, controls the transcription of genes involved in arginine and lysine metabolism. The sequence is that of HTH-type transcriptional regulator ArgP from Salmonella choleraesuis (strain SC-B67).